The chain runs to 362 residues: MTELLKTPIHPLYAKYGAKTIDFGGWDLPVQFAGIKAEHEAVRTDAGLFDVSHMGEILVKGPDSTSYLQYLLTNDIEKIKIGKAQYNIMCYETGGTVDDLVVYKKSETEYILVVNAANTDKDFEWMVKNIRGDVSVTNVSSEYGQLALQGPSAEKILAKLTDVDLSSISFFGFVEDADVAGVKTIISRSGYTGEDGFEIYMPSADAGKVFEAILAEGVAPIGLGARDTLRLEAVLALYGQELSKDITPLEAGLNFAVKLKKEADFIGKEALIKQKEAGLNRKLVGIELIERGIPRHDYPVFLNEEEIGIVTSGTQSPTLGTNIGLALIDTAYTEIGQEVEVGIRNKKIKAKIVPTPFYKRAK.

The protein belongs to the GcvT family. The glycine cleavage system is composed of four proteins: P, T, L and H.

The enzyme catalyses N(6)-[(R)-S(8)-aminomethyldihydrolipoyl]-L-lysyl-[protein] + (6S)-5,6,7,8-tetrahydrofolate = N(6)-[(R)-dihydrolipoyl]-L-lysyl-[protein] + (6R)-5,10-methylene-5,6,7,8-tetrahydrofolate + NH4(+). In terms of biological role, the glycine cleavage system catalyzes the degradation of glycine. The polypeptide is Aminomethyltransferase (Listeria monocytogenes serotype 4b (strain F2365)).